Reading from the N-terminus, the 111-residue chain is Universal stress protein B (111 aa).

2 consecutive transmembrane segments (helical) span residues 1–21 and 90–110; these read MISTIALFWALCVVCVVNMAR and FILTSALCGLVVVSLIALMIW.

This sequence belongs to the universal stress protein B family.

It is found in the cell inner membrane. This chain is Universal stress protein B, found in Klebsiella pneumoniae (strain 342).